The following is a 798-amino-acid chain: Bromodomain-containing protein 2 (798 aa).

M1 bears the N-acetylmethionine mark. Positions 1-21 (MLQNVTPHKLPGEGNAGLLGL) are disordered. T6 carries the phosphothreonine modification. At S36 the chain carries Phosphoserine. The segment at 53-72 (LQLAPANPPPPEVSNPKKPG) is disordered. Positions 73-179 (RVTNQLQYLH…KIFLQKVASM (107 aa)) constitute a Bromo 1 domain. Positions 111, 154, 155, 156, 159, and 160 each coordinate a protein. 3 disordered regions span residues 267–348 (PPAQ…LSEQ), 454–645 (DEPL…YDEK), and 736–798 (KRLQ…SDSG). A compositionally biased stretch (low complexity) spans 284–297 (TTTPTPTAILAPGS). Phosphoserine is present on residues S297, S300, and S304. Basic and acidic residues predominate over residues 315-331 (MRRESGRPIKPPRKDLP). The Bromo 2 domain occupies 343 to 452 (GKLSEQLKHC…DVFEFRYAKM (110 aa)). A compositionally biased stretch (acidic residues) spans 480–512 (SSEESSSESSSEEEEEEEEDEDEEESESSDSEE). Positions 542-564 (KPKRKREKKEKKKKRKAEKHRGR) are enriched in basic residues. Positions 553–557 (KKKRK) match the Nuclear localization signal motif. In terms of domain architecture, NET spans 630–712 (DSEEEEESRP…SCLRKKPRKP (83 aa)). S631 carries the post-translational modification Phosphoserine. A compositionally biased stretch (low complexity) spans 772–792 (SASSSSSDSSSSSSSSSSSDT).

This sequence belongs to the BET family. Homodimer. Interacts with E2F1. Interacts with (acetylated) STAT3; promoting STAT3 recruitment to chromatin. Interacts with CTCF; promoting BRD2 recruitment to chromatin. As to expression, predominantly expressed in the testis, followed by ovary, placenta, embryo and to a lower extent in somatic tissues.

It is found in the nucleus. Its subcellular location is the chromosome. Functionally, chromatin reader protein that specifically recognizes and binds histone H4 acetylated at 'Lys-5' and 'Lys-12' (H4K5ac and H4K12ac, respectively), thereby controlling gene expression and remodeling chromatin structures. Recruits transcription factors and coactivators to target gene sites, and activates RNA polymerase II machinery for transcriptional elongation. Plays a key role in genome compartmentalization via its association with CTCF and cohesin: recruited to chromatin by CTCF and promotes formation of topologically associating domains (TADs) via its ability to bind acetylated histones, contributing to CTCF boundary formation and enhancer insulation. Also recognizes and binds acetylated non-histone proteins, such as STAT3. Involved in inflammatory response by regulating differentiation of naive CD4(+) T-cells into T-helper Th17: recognizes and binds STAT3 acetylated at 'Lys-87', promoting STAT3 recruitment to chromatin. In addition to acetylated lysines, also recognizes and binds lysine residues on histones that are both methylated and acetylated on the same side chain to form N6-acetyl-N6-methyllysine (Kacme), an epigenetic mark of active chromatin associated with increased transcriptional initiation. Specifically binds histone H4 acetyl-methylated at 'Lys-5' and 'Lys-12' (H4K5acme and H4K12acme, respectively). This Mus musculus (Mouse) protein is Bromodomain-containing protein 2.